We begin with the raw amino-acid sequence, 345 residues long: N-acetyl-gamma-glutamyl-phosphate reductase (345 aa).

Cys-149 is an active-site residue.

This sequence belongs to the NAGSA dehydrogenase family. Type 1 subfamily.

It is found in the cytoplasm. The enzyme catalyses N-acetyl-L-glutamate 5-semialdehyde + phosphate + NADP(+) = N-acetyl-L-glutamyl 5-phosphate + NADPH + H(+). The protein operates within amino-acid biosynthesis; L-arginine biosynthesis; N(2)-acetyl-L-ornithine from L-glutamate: step 3/4. In terms of biological role, catalyzes the NADPH-dependent reduction of N-acetyl-5-glutamyl phosphate to yield N-acetyl-L-glutamate 5-semialdehyde. The chain is N-acetyl-gamma-glutamyl-phosphate reductase from Geobacillus sp. (strain WCH70).